We begin with the raw amino-acid sequence, 432 residues long: Asparagine--tRNA ligase (432 aa).

The protein belongs to the class-II aminoacyl-tRNA synthetase family. As to quaternary structure, homodimer.

It is found in the cytoplasm. It carries out the reaction tRNA(Asn) + L-asparagine + ATP = L-asparaginyl-tRNA(Asn) + AMP + diphosphate + H(+). This Lactobacillus johnsonii (strain CNCM I-12250 / La1 / NCC 533) protein is Asparagine--tRNA ligase.